The sequence spans 214 residues: Thymidylate kinase (214 aa).

14 to 21 is a binding site for ATP; that stretch reads GLEGAGKT.

The protein belongs to the thymidylate kinase family.

It carries out the reaction dTMP + ATP = dTDP + ADP. Functionally, phosphorylation of dTMP to form dTDP in both de novo and salvage pathways of dTTP synthesis. This is Thymidylate kinase from Mannheimia succiniciproducens (strain KCTC 0769BP / MBEL55E).